Reading from the N-terminus, the 157-residue chain is Frd operon probable iron-sulfur subunit A (157 aa).

4Fe-4S ferredoxin-type domains follow at residues 24 to 55, 56 to 85, and 100 to 133; these read KGFS…IHNK, DYYY…VVSR, and FKAE…CIDR. 12 residues coordinate [4Fe-4S] cluster: cysteine 34, cysteine 37, cysteine 42, cysteine 46, cysteine 65, cysteine 68, cysteine 71, cysteine 75, cysteine 107, cysteine 110, cysteine 119, and cysteine 123.

This is Frd operon probable iron-sulfur subunit A from Proteus vulgaris.